The following is a 46-amino-acid chain: Sperm protamine P1 (46 aa).

It belongs to the protamine P1 family. Testis.

The protein resides in the nucleus. It localises to the chromosome. Its function is as follows. Protamines substitute for histones in the chromatin of sperm during the haploid phase of spermatogenesis. They compact sperm DNA into a highly condensed, stable and inactive complex. The polypeptide is Sperm protamine P1 (PRM1) (Glauconycteris beatrix (Beatrix's bat)).